The following is a 663-amino-acid chain: DNA topoisomerase 4 subunit B (663 aa).

ATP contacts are provided by residues Tyr-7, Asn-47, Asp-74, 114–120 (GLHGVGA), and Lys-341. The tract at residues 386-416 (REAARKAREDARSGKKNKRKDTLLSGKLTPA) is disordered. Positions 387-398 (EAARKAREDARS) are enriched in basic and acidic residues. The Toprim domain occupies 424–538 (NELYLVEGDS…AGRVFIALPP (115 aa)). Mg(2+)-binding residues include Glu-430, Asp-503, and Asp-505.

This sequence belongs to the type II topoisomerase family. ParE type 2 subfamily. As to quaternary structure, heterotetramer composed of ParC and ParE. Requires Mg(2+) as cofactor. Mn(2+) is required as a cofactor. It depends on Ca(2+) as a cofactor.

It carries out the reaction ATP-dependent breakage, passage and rejoining of double-stranded DNA.. Topoisomerase IV is essential for chromosome segregation. It relaxes supercoiled DNA. Performs the decatenation events required during the replication of a circular DNA molecule. This is DNA topoisomerase 4 subunit B from Staphylococcus aureus (strain Mu50 / ATCC 700699).